A 274-amino-acid chain; its full sequence is uncharacterized protein (274 aa).

It localises to the plastid. It is found in the chloroplast. This is an uncharacterized protein from Euglena gracilis.